Reading from the N-terminus, the 101-residue chain is Small ribosomal subunit protein uS14 (101 aa).

It belongs to the universal ribosomal protein uS14 family. In terms of assembly, part of the 30S ribosomal subunit. Contacts proteins S3 and S10.

Binds 16S rRNA, required for the assembly of 30S particles and may also be responsible for determining the conformation of the 16S rRNA at the A site. The chain is Small ribosomal subunit protein uS14 from Hahella chejuensis (strain KCTC 2396).